Here is a 548-residue protein sequence, read N- to C-terminus: Folylpolyglutamate synthase (548 aa).

130-133 provides a ligand contact to ATP; the sequence is GKGS. Residues S157, E234, and H262 each contribute to the Mg(2+) site. ATP-binding residues include R382 and D396.

This sequence belongs to the folylpolyglutamate synthase family. A monovalent cation serves as cofactor.

It is found in the mitochondrion inner membrane. Its subcellular location is the mitochondrion matrix. The protein resides in the cytoplasm. It catalyses the reaction (6S)-5,6,7,8-tetrahydrofolyl-(gamma-L-Glu)(n) + L-glutamate + ATP = (6S)-5,6,7,8-tetrahydrofolyl-(gamma-L-Glu)(n+1) + ADP + phosphate + H(+). Its pathway is cofactor biosynthesis; tetrahydrofolylpolyglutamate biosynthesis. Functionally, catalyzes conversion of folates to polyglutamate derivatives allowing concentration of folate compounds in the cell and the intracellular retention of these cofactors, which are important substrates for most of the folate-dependent enzymes that are involved in one-carbon transfer reactions involved in purine, pyrimidine and amino acid synthesis. Required for methionine synthesis and maintenance of intact mitochondrial DNA. Involved in telomere maintenance. The sequence is that of Folylpolyglutamate synthase from Saccharomyces cerevisiae (strain FostersO) (Baker's yeast).